A 117-amino-acid polypeptide reads, in one-letter code: Large ribosomal subunit protein bL19 (117 aa).

It belongs to the bacterial ribosomal protein bL19 family.

In terms of biological role, this protein is located at the 30S-50S ribosomal subunit interface and may play a role in the structure and function of the aminoacyl-tRNA binding site. This Bacteroides fragilis (strain ATCC 25285 / DSM 2151 / CCUG 4856 / JCM 11019 / LMG 10263 / NCTC 9343 / Onslow / VPI 2553 / EN-2) protein is Large ribosomal subunit protein bL19.